Here is a 150-residue protein sequence, read N- to C-terminus: Galectin-1 (150 aa).

Residues 9 to 141 (NQIKLQDDFK…FSSPVTVDIH (133 aa)) form the Galectin domain. A carbohydrate-binding residues include His51, Arg55, Asn64, and Glu75.

As to quaternary structure, homotetramer. Oligomerization is required for carbohydrate binding. As to expression, most abundant in fruiting bodies. Very low levels of expression in asexual vegetative mycelia.

It is found in the secreted. Its subcellular location is the extracellular space. The protein resides in the extracellular matrix. It localises to the cell wall. The protein localises to the endomembrane system. Its function is as follows. Binds lactose. May play a role in fruiting body formation. The chain is Galectin-1 (Cgl1) from Coprinopsis cinerea (strain Okayama-7 / 130 / ATCC MYA-4618 / FGSC 9003) (Inky cap fungus).